Reading from the N-terminus, the 166-residue chain is UPF0336 protein MT0525.1 (166 aa).

The MaoC-like domain maps to 8–131 (QTLIGKHYRA…VLAEIRSEVT (124 aa)).

It belongs to the UPF0336 family.

The protein is UPF0336 protein MT0525.1 of Mycobacterium tuberculosis (strain CDC 1551 / Oshkosh).